A 171-amino-acid polypeptide reads, in one-letter code: 3-hydroxydecanoyl-[acyl-carrier-protein] dehydratase (171 aa).

His-70 is an active-site residue.

Belongs to the thioester dehydratase family. FabA subfamily. Homodimer.

The protein resides in the cytoplasm. The catalysed reaction is a (3R)-hydroxyacyl-[ACP] = a (2E)-enoyl-[ACP] + H2O. It carries out the reaction (3R)-hydroxydecanoyl-[ACP] = (2E)-decenoyl-[ACP] + H2O. It catalyses the reaction (2E)-decenoyl-[ACP] = (3Z)-decenoyl-[ACP]. It functions in the pathway lipid metabolism; fatty acid biosynthesis. Its function is as follows. Necessary for the introduction of cis unsaturation into fatty acids. Catalyzes the dehydration of (3R)-3-hydroxydecanoyl-ACP to E-(2)-decenoyl-ACP and then its isomerization to Z-(3)-decenoyl-ACP. Can catalyze the dehydratase reaction for beta-hydroxyacyl-ACPs with saturated chain lengths up to 16:0, being most active on intermediate chain length. The sequence is that of 3-hydroxydecanoyl-[acyl-carrier-protein] dehydratase from Methylobacillus flagellatus (strain ATCC 51484 / DSM 6875 / VKM B-1610 / KT).